We begin with the raw amino-acid sequence, 167 residues long: NAD(P)H-quinone oxidoreductase subunit I, chloroplastic (167 aa).

2 4Fe-4S ferredoxin-type domains span residues 55–84 (GRIH…VDWK) and 95–124 (LNYS…MTEE). The [4Fe-4S] cluster site is built by cysteine 64, cysteine 67, cysteine 70, cysteine 74, cysteine 104, cysteine 107, cysteine 110, and cysteine 114.

Belongs to the complex I 23 kDa subunit family. In terms of assembly, NDH is composed of at least 16 different subunits, 5 of which are encoded in the nucleus. The cofactor is [4Fe-4S] cluster.

The protein localises to the plastid. It localises to the chloroplast thylakoid membrane. It carries out the reaction a plastoquinone + NADH + (n+1) H(+)(in) = a plastoquinol + NAD(+) + n H(+)(out). The enzyme catalyses a plastoquinone + NADPH + (n+1) H(+)(in) = a plastoquinol + NADP(+) + n H(+)(out). Functionally, NDH shuttles electrons from NAD(P)H:plastoquinone, via FMN and iron-sulfur (Fe-S) centers, to quinones in the photosynthetic chain and possibly in a chloroplast respiratory chain. The immediate electron acceptor for the enzyme in this species is believed to be plastoquinone. Couples the redox reaction to proton translocation, and thus conserves the redox energy in a proton gradient. The chain is NAD(P)H-quinone oxidoreductase subunit I, chloroplastic from Aethionema cordifolium (Lebanon stonecress).